The following is a 462-amino-acid chain: Ribosomal protein uS12 methylthiotransferase RimO (462 aa).

The 116-residue stretch at 10 to 125 (PRIGMVSLGC…VLDAVHRNLP (116 aa)) folds into the MTTase N-terminal domain. [4Fe-4S] cluster contacts are provided by Cys-19, Cys-55, Cys-84, Cys-160, Cys-164, and Cys-167. Residues 146–388 (LTPRHYAYLK…AVAEALSSAK (243 aa)) form the Radical SAM core domain. Residues 390 to 462 (QRRVGATMQV…RGHDLLAQPI (73 aa)) form the TRAM domain.

This sequence belongs to the methylthiotransferase family. RimO subfamily. Requires [4Fe-4S] cluster as cofactor.

The protein localises to the cytoplasm. It catalyses the reaction L-aspartate(89)-[ribosomal protein uS12]-hydrogen + (sulfur carrier)-SH + AH2 + 2 S-adenosyl-L-methionine = 3-methylsulfanyl-L-aspartate(89)-[ribosomal protein uS12]-hydrogen + (sulfur carrier)-H + 5'-deoxyadenosine + L-methionine + A + S-adenosyl-L-homocysteine + 2 H(+). Its function is as follows. Catalyzes the methylthiolation of an aspartic acid residue of ribosomal protein uS12. This chain is Ribosomal protein uS12 methylthiotransferase RimO, found in Verminephrobacter eiseniae (strain EF01-2).